The sequence spans 386 residues: Porin PorA (386 aa).

Residues 1-35 (MKRTLGHALIIIGAALIVIAVLLPTFLVPRLRVIP) form the signal peptide. Residues 53-63 (DSSQLGKNEPT) show a composition bias toward polar residues. The interval 53 to 78 (DSSQLGKNEPTPNRKNDPRCKAETDE) is disordered. The segment covering 64 to 78 (PNRKNDPRCKAETDE) has biased composition (basic and acidic residues).

This sequence belongs to the PorA family.

Its subcellular location is the secreted. The protein localises to the cell wall. In terms of biological role, forms water-filled channels that favor the permeation of cations. This is Porin PorA from Corynebacterium amycolatum.